The sequence spans 92 residues: Defensin alpha 4 (92 aa).

An N-terminal signal peptide occupies residues 1 to 19 (MKTLVLLSALVLLAFQVQA). Residues 20 to 58 (DPIQNTDEETKTEEQPGEEDQAVSISFGGQEGSALHEKS) constitute a propeptide that is removed on maturation. The disordered stretch occupies residues 23 to 42 (QNTDEETKTEEQPGEEDQAV). 3 disulfides stabilise this stretch: C64–C89, C66–C81, and C71–C88.

It belongs to the alpha-defensin family. Paneth cells of the small bowel.

The protein resides in the secreted. It is found in the cytoplasmic vesicle. The protein localises to the secretory vesicle. In terms of biological role, host-defense peptide that has antimicrobial activity. Exhibits activity against Gram-negative E.coli (in vitro). Probably contributes to the antimicrobial barrier function of the small bowel mucosa. In Mus musculus (Mouse), this protein is Defensin alpha 4.